An 81-amino-acid polypeptide reads, in one-letter code: Sulfur carrier protein TusA (81 aa).

C19 functions as the Cysteine persulfide intermediate in the catalytic mechanism.

It belongs to the sulfur carrier protein TusA family.

Its subcellular location is the cytoplasm. Its function is as follows. Sulfur carrier protein which probably makes part of a sulfur-relay system. The chain is Sulfur carrier protein TusA from Shewanella oneidensis (strain ATCC 700550 / JCM 31522 / CIP 106686 / LMG 19005 / NCIMB 14063 / MR-1).